The following is a 397-amino-acid chain: Putative gustatory receptor 93c (397 aa).

The Cytoplasmic segment spans residues 1-12 (MIERLKKVSLPA). A helical transmembrane segment spans residues 13–33 (LSAFILFCSCHYGRILGVICF). The Extracellular portion of the chain corresponds to 34-87 (DIGQRTSDDSLVVRNRHQFKWFCLSCRLISVTAVCCFCAPYVADIEDPYERLLQ). Residues 88–108 (CFRLSASLICGICIIVVQVCY) traverse the membrane as a helical segment. Over 109 to 141 (EKELLRMIISFLRLFRRVRRLSSLKRIGFGGKR) the chain is Cytoplasmic. A helical transmembrane segment spans residues 142–162 (EFFLLLFKFICLVYELYSEIC). At 163-179 (QLWHLPDSLSLFATLCE) the chain is on the extracellular side. A helical membrane pass occupies residues 180 to 200 (IFLEIGSLMIIHIGFVGYLSV). Residues 201–266 (AALYSEVNSF…RTFHRLLELP (66 aa)) are Cytoplasmic-facing. Residues 267-287 (VLIILLGKIFATTILSYEVII) form a helical membrane-spanning segment. Residues 288–295 (RPELYARK) are Extracellular-facing. A helical transmembrane segment spans residues 296-316 (IGMWGLVVKSFADVILLTLAV). Residues 317-371 (HEAVSSSRMMRRLSLENFPITDHKAWHMKWEMFLSRLNFFEFRVRPLGLFEVSNE) are Cytoplasmic-facing. Residues 372–392 (VILLFLSSMITYFTYVVQYGI) form a helical membrane-spanning segment. The Extracellular segment spans residues 393–397 (QTNRL).

Belongs to the insect chemoreceptor superfamily. Gustatory receptor (GR) family. Gr93a subfamily. In larvae, is expressed in neurons of the posterior pharyngeal sense organ.

Its subcellular location is the cell membrane. Functionally, probable gustatory receptor which mediates acceptance or avoidance behavior, depending on its substrates. The chain is Putative gustatory receptor 93c (Gr93c) from Drosophila melanogaster (Fruit fly).